Consider the following 112-residue polypeptide: Nucleoid-associated protein Pfl01_1806 (112 aa).

It belongs to the YbaB/EbfC family. In terms of assembly, homodimer.

It is found in the cytoplasm. Its subcellular location is the nucleoid. Functionally, binds to DNA and alters its conformation. May be involved in regulation of gene expression, nucleoid organization and DNA protection. The chain is Nucleoid-associated protein Pfl01_1806 from Pseudomonas fluorescens (strain Pf0-1).